Reading from the N-terminus, the 494-residue chain is Amidophosphoribosyltransferase (494 aa).

The propeptide occupies 1 to 10 (MFNYSGLNEE). Cys11 acts as the Nucleophile in catalysis. The region spanning 11-231 (CGVFGIWNHP…AGEYVVINDK (221 aa)) is the Glutamine amidotransferase type-2 domain. Positions 294, 356, and 357 each coordinate Mg(2+).

In the C-terminal section; belongs to the purine/pyrimidine phosphoribosyltransferase family. Requires Mg(2+) as cofactor.

It carries out the reaction 5-phospho-beta-D-ribosylamine + L-glutamate + diphosphate = 5-phospho-alpha-D-ribose 1-diphosphate + L-glutamine + H2O. It functions in the pathway purine metabolism; IMP biosynthesis via de novo pathway; N(1)-(5-phospho-D-ribosyl)glycinamide from 5-phospho-alpha-D-ribose 1-diphosphate: step 1/2. Catalyzes the formation of phosphoribosylamine from phosphoribosylpyrophosphate (PRPP) and glutamine. The protein is Amidophosphoribosyltransferase of Staphylococcus aureus (strain COL).